The sequence spans 223 residues: Cuticular glutathione peroxidase (223 aa).

The signal sequence occupies residues 1–19 (MSAQLLILSHMVLLQLIVA). An N-linked (GlcNAc...) asparagine glycan is attached at N39. C74 is a catalytic residue. A glycan (N-linked (GlcNAc...) asparagine) is linked at N92.

This sequence belongs to the glutathione peroxidase family. As to quaternary structure, homotetramer.

It localises to the secreted. It catalyses the reaction 2 glutathione + H2O2 = glutathione disulfide + 2 H2O. Could inhibit the oxidative burst of leukocytes and neutralize the secondary products of lipid peroxidation, thus providing the resistance of these parasites to immune effector mechanisms and their persistence in the mammalian host. It may also be involved in the formation of cross-linking residues such as dityrosine, trityrosine and isotrityrosine identified in cuticular collagen. Highly cross-linked external cortex may also serve to protect the parasite from immune attack. The chain is Cuticular glutathione peroxidase from Brugia malayi (Filarial nematode worm).